Here is a 366-residue protein sequence, read N- to C-terminus: Putative actin-9 (366 aa).

Belongs to the actin family. In terms of assembly, polymerization of globular actin (G-actin) leads to a structural filament (F-actin) in the form of a two-stranded helix. The binding of profilin to monomeric G-actin cause the sequestration of actin into profilactin complexes, and prevents the polymerization.

It is found in the cytoplasm. The protein localises to the cytoskeleton. Its function is as follows. Actins are highly conserved proteins that are involved in various types of cell motility and are ubiquitously expressed in all eukaryotic cells. Essential component of cell cytoskeleton; plays an important role in cytoplasmic streaming, cell shape determination, cell division, organelle movement and extension growth. The chain is Putative actin-9 (ACT9) from Arabidopsis thaliana (Mouse-ear cress).